The chain runs to 500 residues: Probable cytosol aminopeptidase (500 aa).

Lys269 and Asp274 together coordinate Mn(2+). The active site involves Lys281. Residues Asp292, Asp351, and Glu353 each coordinate Mn(2+). Arg355 is an active-site residue.

It belongs to the peptidase M17 family. It depends on Mn(2+) as a cofactor.

It is found in the cytoplasm. It catalyses the reaction Release of an N-terminal amino acid, Xaa-|-Yaa-, in which Xaa is preferably Leu, but may be other amino acids including Pro although not Arg or Lys, and Yaa may be Pro. Amino acid amides and methyl esters are also readily hydrolyzed, but rates on arylamides are exceedingly low.. The enzyme catalyses Release of an N-terminal amino acid, preferentially leucine, but not glutamic or aspartic acids.. Presumably involved in the processing and regular turnover of intracellular proteins. Catalyzes the removal of unsubstituted N-terminal amino acids from various peptides. The sequence is that of Probable cytosol aminopeptidase from Acidithiobacillus ferrooxidans (strain ATCC 23270 / DSM 14882 / CIP 104768 / NCIMB 8455) (Ferrobacillus ferrooxidans (strain ATCC 23270)).